The chain runs to 237 residues: Phosphoribosylaminoimidazole-succinocarboxamide synthase (237 aa).

The protein belongs to the SAICAR synthetase family.

It catalyses the reaction 5-amino-1-(5-phospho-D-ribosyl)imidazole-4-carboxylate + L-aspartate + ATP = (2S)-2-[5-amino-1-(5-phospho-beta-D-ribosyl)imidazole-4-carboxamido]succinate + ADP + phosphate + 2 H(+). It participates in purine metabolism; IMP biosynthesis via de novo pathway; 5-amino-1-(5-phospho-D-ribosyl)imidazole-4-carboxamide from 5-amino-1-(5-phospho-D-ribosyl)imidazole-4-carboxylate: step 1/2. The sequence is that of Phosphoribosylaminoimidazole-succinocarboxamide synthase from Campylobacter fetus subsp. fetus (strain 82-40).